Here is a 281-residue protein sequence, read N- to C-terminus: MTDPAPPPTALAAAKARMRELAASYGAGLPGRDTHSLMHGLDGITLTFMPMGQRDGAYDPEHHVILINSQVRPERQRFTLAHEISHALLLGDDDLLSDLHDEYEGDRLEQVIETLCNVGAAALLMPAELIDDLLTRFGPTGRALAELARRADVSATSALYALAERTAPPVIYAVCALSRQEDEGEGGGAKELTVRASSASAGVKYSLSAGTPVPDDHPAALALDTRLPLAQDSYVPFRSGRRMPAYVDAFPERQRVLVSFALPAGRSEPDADKPEAPGDQS.

Residue His-82 coordinates Zn(2+). Glu-83 is a catalytic residue. Zn(2+) contacts are provided by His-86 and Glu-113. Positions 262 to 281 (LPAGRSEPDADKPEAPGDQS) are disordered. Positions 267–281 (SEPDADKPEAPGDQS) are enriched in basic and acidic residues.

In terms of assembly, interacts with DdrOC.

With respect to regulation, protease activity is inhibited by EDTA. In terms of biological role, plays a central regulatory role in DNA repair and protection pathways in response to radiation stress. Acts as a site-specific metalloprotease that cleaves and inactivates the repressor proteins DdrOC and DdrOP3, resulting in induced expression of genes required for DNA repair and cell survival after exposure to radiation. The sequence is that of Radiation response metalloprotease IrrE from Deinococcus deserti (strain DSM 17065 / CIP 109153 / LMG 22923 / VCD115).